Here is a 329-residue protein sequence, read N- to C-terminus: Taste receptor type 2 member 134 (329 aa).

The Extracellular segment spans residues 1 to 27 (MRCSLRGCVQGRGGKSGVSLSKFSPKK). A helical membrane pass occupies residues 28-48 (MSFFFIFMVIFCIQSLVALLQ). The Cytoplasmic segment spans residues 49 to 68 (NGFLATVLGREWVRSQGLPA). The chain crosses the membrane as a helical span at residues 69-89 (GDMIVACLAASRFCLHGVAIV). Topologically, residues 90–121 (NNFLTFVKLWSQKIYFSVLWDFVNTVNFWCTT) are extracellular. A helical transmembrane segment spans residues 122-142 (WLAIFYCVKISSFSHPIFFWI). Topologically, residues 143–153 (KWRISRSVPRL) are cytoplasmic. The helical transmembrane segment at 154 to 174 (LLGSLVIGGLSAVSSATGNTI) threads the bilayer. The Extracellular portion of the chain corresponds to 175–201 (AFQMTACENYTLAYRTRAFYAYYFRCH). An N-linked (GlcNAc...) asparagine glycan is attached at Asn183. Residues 202–222 (AMLMWIIPFFLFLLSVILLMF) traverse the membrane as a helical segment. Residues 223 to 251 (SLYRHLEHMRYRRPWSHDYSTQAHTMALK) lie on the Cytoplasmic side of the membrane. The helical transmembrane segment at 252 to 272 (SLAFFLVFYTSYVLFLVISVT) threads the bilayer. Topologically, residues 273-282 (RVVNVHSSWH) are extracellular. The chain crosses the membrane as a helical span at residues 283–303 (WAWEVITYMGILLHSTILTLS). At 304-329 (NPKMRKALKIKFPDLCVARSQDKRRG) the chain is on the cytoplasmic side.

The protein belongs to the G-protein coupled receptor T2R family. In terms of tissue distribution, expressed in tongue and gastrointestinal tract.

Its subcellular location is the membrane. Putative taste receptor which may play a role in the perception of bitterness. The sequence is that of Taste receptor type 2 member 134 from Rattus norvegicus (Rat).